Here is a 222-residue protein sequence, read N- to C-terminus: Eukaryotic translation initiation factor 4E-2 (222 aa).

Residues 1-20 (MVDEVEKPVSLEESKTNTRE) are compositionally biased toward basic and acidic residues. Positions 1–35 (MVDEVEKPVSLEESKTNTREVEEEGEIVGESDDTM) are disordered. Positions 21-33 (VEEEGEIVGESDD) are enriched in acidic residues. EIF4G-binding stretches follow at residues 47 to 50 (HALE) and 57 to 93 (FDNP…NNIH). MRNA-binding positions include 65–70 (KQAAWG), lysine 97, and 115–116 (WE). The cysteines at positions 120 and 158 are disulfide-linked. Residues 141-150 (YTLLAMIGEQ) are EIF4G-binding. Residues 165 to 170 (RVRQEK) and 210 to 214 (KKLDR) contribute to the mRNA site.

Belongs to the eukaryotic initiation factor 4E family. In terms of assembly, EIF4F is a multi-subunit complex, the composition of which varies with external and internal environmental conditions. It is composed of at least EIF4A, EIF4E and EIF4G. EIF4E is also known to interact with other partners. In higher plants two isoforms of EIF4F have been identified, named isoform EIF4F and isoform EIF(iso)4F. Isoform EIF4F has subunits p220 and p26, whereas isoform EIF(iso)4F has subunits p82 and p28. As to quaternary structure, (Microbial infection) Interacts with potyvirus viral genome-linked protein (VPg); this interaction is possible in susceptible hosts but impaired in resistant plants. According to the redox status, the Cys-120-Cys-158 disulfide bridge may have a role in regulating protein function by affecting its ability to bind capped mRNA. In terms of tissue distribution, strongly expressed in susceptible plants but not in resistant ones.

It is found in the nucleus. Its subcellular location is the cytoplasm. Functionally, component of the protein complex eIF4F, which is involved in the recognition of the mRNA cap, ATP-dependent unwinding of 5'-terminal secondary structure and recruitment of mRNA to the ribosome. Recognizes and binds the 7-methylguanosine-containing mRNA cap during an early step in the initiation of protein synthesis and facilitates ribosome binding by inducing the unwinding of the mRNAs secondary structures. Key component of recessive resistance to potyviruses. Its function is as follows. (Microbial infection) Susceptibility host factor required for viral infection (e.g. potato virus Y (PVY) and pepper mottle virus (PepMoV)) by recruiting viral RNAs to the host ribosomal complex via an interaction with viral genome-linked protein (VPg). This Nicotiana tabacum (Common tobacco) protein is Eukaryotic translation initiation factor 4E-2.